The primary structure comprises 201 residues: Recombination protein RecR (201 aa).

A C4-type zinc finger spans residues 60-75; it reads CSCCGNVDTIDPCTVC. The Toprim domain occupies 83–178; the sequence is SMIIVVEDVS…KTTRLAHGVP (96 aa).

This sequence belongs to the RecR family.

Functionally, may play a role in DNA repair. It seems to be involved in an RecBC-independent recombinational process of DNA repair. It may act with RecF and RecO. This is Recombination protein RecR from Allorhizobium ampelinum (strain ATCC BAA-846 / DSM 112012 / S4) (Agrobacterium vitis (strain S4)).